A 35-amino-acid polypeptide reads, in one-letter code: Probable protein L3 (35 aa).

The sequence is that of Probable protein L3 from Odocoileus virginianus papillomavirus 1 (DPV).